Here is a 69-residue protein sequence, read N- to C-terminus: DNA gyrase inhibitor YacG (69 aa).

The Zn(2+) site is built by Cys7, Cys10, Cys26, and Cys30.

Belongs to the DNA gyrase inhibitor YacG family. Interacts with GyrB. Zn(2+) serves as cofactor.

Functionally, inhibits all the catalytic activities of DNA gyrase by preventing its interaction with DNA. Acts by binding directly to the C-terminal domain of GyrB, which probably disrupts DNA binding by the gyrase. This chain is DNA gyrase inhibitor YacG, found in Shewanella sp. (strain W3-18-1).